A 195-amino-acid chain; its full sequence is Peptidyl-tRNA hydrolase (195 aa).

Tyrosine 18 is a tRNA binding site. The active-site Proton acceptor is the histidine 23. 3 residues coordinate tRNA: phenylalanine 69, asparagine 71, and asparagine 117.

Belongs to the PTH family. As to quaternary structure, monomer.

It is found in the cytoplasm. It carries out the reaction an N-acyl-L-alpha-aminoacyl-tRNA + H2O = an N-acyl-L-amino acid + a tRNA + H(+). Functionally, hydrolyzes ribosome-free peptidyl-tRNAs (with 1 or more amino acids incorporated), which drop off the ribosome during protein synthesis, or as a result of ribosome stalling. Its function is as follows. Catalyzes the release of premature peptidyl moieties from peptidyl-tRNA molecules trapped in stalled 50S ribosomal subunits, and thus maintains levels of free tRNAs and 50S ribosomes. The sequence is that of Peptidyl-tRNA hydrolase from Alcanivorax borkumensis (strain ATCC 700651 / DSM 11573 / NCIMB 13689 / SK2).